We begin with the raw amino-acid sequence, 314 residues long: Homeobox protein knotted-1-like 3 (314 aa).

The 21-residue stretch at 218–238 (ELKIELKQGFKSRIEDVREEI) folds into the ELK domain. The segment at residues 239-302 (LRKRRAGKLP…NQRKRNWHNN (64 aa)) is a DNA-binding region (homeobox; TALE-type).

This sequence belongs to the TALE/KNOX homeobox family. As to expression, isoform 1 is expressed in roots and flowers, and at lower levels in leaf blades and leaf sheaths. Isoform 2 is expressed in roots and flowers.

It is found in the nucleus. This is Homeobox protein knotted-1-like 3 (HOS66) from Oryza sativa subsp. japonica (Rice).